The sequence spans 326 residues: Toluene-4-monooxygenase system, ferredoxin--NAD(+) reductase component (326 aa).

Residues 1 to 92 form the 2Fe-2S ferredoxin-type domain; the sequence is MFNIQSDDLL…DLKIKVINRA (92 aa). [2Fe-2S] cluster-binding residues include cysteine 36, cysteine 41, cysteine 44, and cysteine 76. A ferredoxin-reductase region spans residues 95 to 326; the sequence is RASHPPKRFS…FEAIHFDRFF (232 aa). The region spanning 100-195 is the FAD-binding FR-type domain; it reads PKRFSTRVVS…DGPYGLSVLK (96 aa). Residues 146-149, 162-164, and 170-172 each bind FAD; these read RAYS, IVK, and KVS.

Belongs to the bacterial ring-hydroxylating dioxygenase ferredoxin reductase family. Monomer. The alkene monooxygenase multicomponent enzyme system is composed of an electron transfer component and a monooxygenase component interacting with the effector protein TmoD. The electron transfer component is composed of a ferredoxin reductase (TmoF) and a ferredoxin (TmoC), and the monooxygenase component is formed by a heterohexamer (dimer of heterotrimers) of two alpha subunits (TmoA), two beta subunits (TmoE) and two gamma subunits (TmoB). FAD is required as a cofactor. It depends on [2Fe-2S] cluster as a cofactor.

The enzyme catalyses 2 reduced [2Fe-2S]-[ferredoxin] + NAD(+) + H(+) = 2 oxidized [2Fe-2S]-[ferredoxin] + NADH. It functions in the pathway xenobiotic degradation; toluene degradation. Reductase component of the toluene-4-monooxygenase multicomponent enzyme system which catalyzes the O2- and NADH-dependent hydroxylation of toluene to form p-cresol. Ferredoxin reductase catalyzes the transfer of electrons from NADH to ferredoxin (TmoC). This chain is Toluene-4-monooxygenase system, ferredoxin--NAD(+) reductase component, found in Ectopseudomonas mendocina (Pseudomonas mendocina).